We begin with the raw amino-acid sequence, 240 residues long: Probable transcriptional activator (240 aa).

The tract at residues 17–28 (CTSCQARHGVVC) is essential for the oxygen-regulated activity. Residues 158-232 (RTAEEKVASL…FRHIIVPDMD (75 aa)) enclose the HTH crp-type domain. A DNA-binding region (H-T-H motif) is located at residues 191–210 (RAEIADFLGLTIETVSRQMT).

Its function is as follows. Promotes the microaerobic and symbiotic induction of fixN, possibly by binding to the FNR consensus binding site upstream of fixN. In Rhizobium leguminosarum bv. viciae, this protein is Probable transcriptional activator (fnrN).